Here is a 277-residue protein sequence, read N- to C-terminus: MRSNVHQGHVARKRFGQNFLVDDTIIHGIVNAISPQAGDVLVEIGPGLGALTDPLLERIPQMQVVELDRDLVERLRRRYGERLQVHAGDALDFDFDKLAVPGRPLRIVGNLPYNISSPLLFHLMEFADHVHDQHFMLQKEVVERMVAEPGSKAFGRLSIMLQVRYYMEHVLDVPPGAFNPPPKVDSAVVRMIPWPRHGDGRLRSPHADCDITVLGDVVTAAFSQRRKVLRNTLSFLRDQVDFDAMGFDLGRRAEEVPVGEYVELARRLGDKASGQAA.

6 residues coordinate S-adenosyl-L-methionine: asparagine 18, leucine 20, glycine 45, glutamate 66, aspartate 89, and asparagine 110.

Belongs to the class I-like SAM-binding methyltransferase superfamily. rRNA adenine N(6)-methyltransferase family. RsmA subfamily.

It is found in the cytoplasm. It carries out the reaction adenosine(1518)/adenosine(1519) in 16S rRNA + 4 S-adenosyl-L-methionine = N(6)-dimethyladenosine(1518)/N(6)-dimethyladenosine(1519) in 16S rRNA + 4 S-adenosyl-L-homocysteine + 4 H(+). Specifically dimethylates two adjacent adenosines (A1518 and A1519) in the loop of a conserved hairpin near the 3'-end of 16S rRNA in the 30S particle. May play a critical role in biogenesis of 30S subunits. In Cupriavidus taiwanensis (strain DSM 17343 / BCRC 17206 / CCUG 44338 / CIP 107171 / LMG 19424 / R1) (Ralstonia taiwanensis (strain LMG 19424)), this protein is Ribosomal RNA small subunit methyltransferase A.